Reading from the N-terminus, the 752-residue chain is Cation-transporting P-type ATPase B (752 aa).

The region spanning 15-78 (RRIRLDVSGM…VVEKAGYHAA (64 aa)) is the HMA domain. A metal cation-binding residues include C26 and C29. The next 6 membrane-spanning stretches (helical) occupy residues 105 to 125 (LLVAAVLFVPLADLSTLFAIV), 132 to 152 (GWGYILTALAAPVVTWAAWPF), 167 to 187 (METLISVGIVAATAWSLSSVF), 201 to 221 (AILNSDSIYLEVAAGVTVFVL), 361 to 381 (IAGVFVPVVFVIAGLAGAAWL), and 390 to 410 (AFSVTLGVLVIACPCALGLAT). D446 functions as the 4-aspartylphosphate intermediate in the catalytic mechanism. Residues 714–734 (AIPIAAAGLLNPLIAGAAMAF) traverse the membrane as a helical segment.

Belongs to the cation transport ATPase (P-type) (TC 3.A.3) family. Type IB subfamily.

It localises to the cell membrane. The enzyme catalyses ATP + H2O = ADP + phosphate + H(+). The chain is Cation-transporting P-type ATPase B (ctpB) from Mycobacterium bovis (strain ATCC BAA-935 / AF2122/97).